Reading from the N-terminus, the 164-residue chain is ATP synthase subunit b (164 aa).

The chain crosses the membrane as a helical span at residues 10–32 (SAAMLMLFVLMVYFLNKFLYTPF).

Belongs to the ATPase B chain family. F-type ATPases have 2 components, F(1) - the catalytic core - and F(0) - the membrane proton channel. F(1) has five subunits: alpha(3), beta(3), gamma(1), delta(1), epsilon(1). F(0) has three main subunits: a(1), b(2) and c(10-14). The alpha and beta chains form an alternating ring which encloses part of the gamma chain. F(1) is attached to F(0) by a central stalk formed by the gamma and epsilon chains, while a peripheral stalk is formed by the delta and b chains.

It localises to the cell inner membrane. In terms of biological role, f(1)F(0) ATP synthase produces ATP from ADP in the presence of a proton or sodium gradient. F-type ATPases consist of two structural domains, F(1) containing the extramembraneous catalytic core and F(0) containing the membrane proton channel, linked together by a central stalk and a peripheral stalk. During catalysis, ATP synthesis in the catalytic domain of F(1) is coupled via a rotary mechanism of the central stalk subunits to proton translocation. Component of the F(0) channel, it forms part of the peripheral stalk, linking F(1) to F(0). The protein is ATP synthase subunit b of Thermotoga maritima (strain ATCC 43589 / DSM 3109 / JCM 10099 / NBRC 100826 / MSB8).